Here is a 359-residue protein sequence, read N- to C-terminus: Quinolinate synthase (359 aa).

Iminosuccinate contacts are provided by H81 and S99. C144 serves as a coordination point for [4Fe-4S] cluster. Iminosuccinate-binding positions include 170–172 and S187; that span reads YVN. Residue C229 participates in [4Fe-4S] cluster binding. Iminosuccinate is bound by residues 255-257 and T272; that span reads HPE. C315 is a binding site for [4Fe-4S] cluster.

It belongs to the quinolinate synthase family. Type 2 subfamily. [4Fe-4S] cluster serves as cofactor.

It is found in the cytoplasm. It catalyses the reaction iminosuccinate + dihydroxyacetone phosphate = quinolinate + phosphate + 2 H2O + H(+). It participates in cofactor biosynthesis; NAD(+) biosynthesis; quinolinate from iminoaspartate: step 1/1. Its function is as follows. Catalyzes the condensation of iminoaspartate with dihydroxyacetone phosphate to form quinolinate. This Sinorhizobium fredii (strain NBRC 101917 / NGR234) protein is Quinolinate synthase.